Consider the following 442-residue polypeptide: D-aminoacyl-tRNA deacylase (442 aa).

Belongs to the DtdA deacylase family. Monomer. The cofactor is Zn(2+).

It carries out the reaction a D-aminoacyl-tRNA + H2O = a tRNA + a D-alpha-amino acid + H(+). The enzyme catalyses glycyl-tRNA(Ala) + H2O = tRNA(Ala) + glycine + H(+). Functionally, D-aminoacyl-tRNA deacylase with broad substrate specificity. By recycling D-aminoacyl-tRNA to D-amino acids and free tRNA molecules, this enzyme counteracts the toxicity associated with the formation of D-aminoacyl-tRNA entities in vivo. The sequence is that of D-aminoacyl-tRNA deacylase from Methanospirillum hungatei JF-1 (strain ATCC 27890 / DSM 864 / NBRC 100397 / JF-1).